Here is a 548-residue protein sequence, read N- to C-terminus: Probable 5-epi-aristolochene synthase 4 (548 aa).

Asp-301, Asp-305, Asp-444, Thr-448, and Glu-452 together coordinate Mg(2+). The DDXXD motif motif lies at 301 to 305 (DDTFD).

It belongs to the terpene synthase family. As to quaternary structure, monomer. It depends on Mg(2+) as a cofactor.

The protein resides in the cytoplasm. The enzyme catalyses (2E,6E)-farnesyl diphosphate = (+)-5-epi-aristolochene + diphosphate. The protein operates within secondary metabolite biosynthesis; terpenoid biosynthesis. In terms of biological role, catalyzes the cyclization of trans,trans-farnesyl diphosphate (FPP) to the bicyclic intermediate 5-epi-aristolochene, initial step in the conversion of FPP to the sesquiterpenoid antifungal phytoalexin capsidiol. Produces germacrene A as an enzyme-bound intermediate that is not released by the enzyme, but is further cyclized to produce the bicyclic 5-epi-aristolochene. This chain is Probable 5-epi-aristolochene synthase 4, found in Nicotiana attenuata (Coyote tobacco).